The chain runs to 202 residues: Glycerol-3-phosphate acyltransferase (202 aa).

Transmembrane regions (helical) follow at residues 3 to 23, 61 to 81, 87 to 107, 118 to 138, 144 to 164, and 167 to 187; these read NLII…LILA, IATI…LKFL, LLWS…YLLF, GAMI…WVVI, ISSL…FIFN, and LEIH…YKHL.

It belongs to the PlsY family. In terms of assembly, probably interacts with PlsX.

It localises to the cell inner membrane. It carries out the reaction an acyl phosphate + sn-glycerol 3-phosphate = a 1-acyl-sn-glycero-3-phosphate + phosphate. The protein operates within lipid metabolism; phospholipid metabolism. Catalyzes the transfer of an acyl group from acyl-phosphate (acyl-PO(4)) to glycerol-3-phosphate (G3P) to form lysophosphatidic acid (LPA). This enzyme utilizes acyl-phosphate as fatty acyl donor, but not acyl-CoA or acyl-ACP. This chain is Glycerol-3-phosphate acyltransferase, found in Campylobacter jejuni subsp. jejuni serotype O:23/36 (strain 81-176).